A 527-amino-acid chain; its full sequence is Transcription initiation factor TFIID subunit 6b (527 aa).

Residues 3–99 enclose the Histone-fold domain; it reads TKESIEVIAQ…NLEPTSGSKS (97 aa). Disordered stretches follow at residues 410–442 and 462–492; these read SPPT…THQP and MRGT…PKTS. 2 stretches are compositionally biased toward polar residues: residues 416–427 and 462–473; these read VWKTNGKLTSPR and MRGTTTVPQQSH.

The protein belongs to the TAF6 family. As to quaternary structure, component of the TFIID complex. TFIID is composed of TATA binding protein (TBP) and a number of TBP-associated factors (TAFs) whose MWs range from 14-217 kDa. Interacts with TAF5 and TAF9. As to expression, expressed in roots, leaves, inflorescences and siliques.

It localises to the nucleus. Functionally, TAFs are components of the transcription factor IID (TFIID) complex that is essential for mediating regulation of RNA polymerase transcription. Not redundant with TAF6. The polypeptide is Transcription initiation factor TFIID subunit 6b (TAF6B) (Arabidopsis thaliana (Mouse-ear cress)).